The following is a 497-amino-acid chain: UDP-N-acetylmuramoyl-L-alanyl-D-glutamate--2,6-diaminopimelate ligase (497 aa).

Position 29 (serine 29) interacts with UDP-N-acetyl-alpha-D-muramoyl-L-alanyl-D-glutamate. Residue 116-122 participates in ATP binding; the sequence is GTNGKTT. Residues asparagine 157, 158–159, serine 185, glutamine 191, and arginine 193 contribute to the UDP-N-acetyl-alpha-D-muramoyl-L-alanyl-D-glutamate site; that span reads TT. N6-carboxylysine is present on lysine 225. Residues arginine 392, 416–419, glycine 467, and glutamate 471 contribute to the meso-2,6-diaminopimelate site; that span reads DNPR. Positions 416–419 match the Meso-diaminopimelate recognition motif motif; that stretch reads DNPR.

This sequence belongs to the MurCDEF family. MurE subfamily. It depends on Mg(2+) as a cofactor. Carboxylation is probably crucial for Mg(2+) binding and, consequently, for the gamma-phosphate positioning of ATP.

The protein resides in the cytoplasm. The enzyme catalyses UDP-N-acetyl-alpha-D-muramoyl-L-alanyl-D-glutamate + meso-2,6-diaminopimelate + ATP = UDP-N-acetyl-alpha-D-muramoyl-L-alanyl-gamma-D-glutamyl-meso-2,6-diaminopimelate + ADP + phosphate + H(+). It functions in the pathway cell wall biogenesis; peptidoglycan biosynthesis. Its function is as follows. Catalyzes the addition of meso-diaminopimelic acid to the nucleotide precursor UDP-N-acetylmuramoyl-L-alanyl-D-glutamate (UMAG) in the biosynthesis of bacterial cell-wall peptidoglycan. The protein is UDP-N-acetylmuramoyl-L-alanyl-D-glutamate--2,6-diaminopimelate ligase of Buchnera aphidicola subsp. Acyrthosiphon pisum (strain APS) (Acyrthosiphon pisum symbiotic bacterium).